Here is a 328-residue protein sequence, read N- to C-terminus: D-cysteine desulfhydrase (328 aa).

K51 carries the N6-(pyridoxal phosphate)lysine modification.

This sequence belongs to the ACC deaminase/D-cysteine desulfhydrase family. In terms of assembly, homodimer. Requires pyridoxal 5'-phosphate as cofactor.

It carries out the reaction D-cysteine + H2O = hydrogen sulfide + pyruvate + NH4(+) + H(+). Its function is as follows. Catalyzes the alpha,beta-elimination reaction of D-cysteine and of several D-cysteine derivatives. It could be a defense mechanism against D-cysteine. This Salmonella schwarzengrund (strain CVM19633) protein is D-cysteine desulfhydrase.